The chain runs to 429 residues: UDP-N-acetylglucosamine 1-carboxyvinyltransferase (429 aa).

22–23 (KN) serves as a coordination point for phosphoenolpyruvate. R102 provides a ligand contact to UDP-N-acetyl-alpha-D-glucosamine. C126 acts as the Proton donor in catalysis. C126 bears the 2-(S-cysteinyl)pyruvic acid O-phosphothioketal mark. Residues 131–135 (RPVDL), 171–174 (KVSV), D316, and I338 each bind UDP-N-acetyl-alpha-D-glucosamine.

Belongs to the EPSP synthase family. MurA subfamily.

The protein resides in the cytoplasm. The catalysed reaction is phosphoenolpyruvate + UDP-N-acetyl-alpha-D-glucosamine = UDP-N-acetyl-3-O-(1-carboxyvinyl)-alpha-D-glucosamine + phosphate. It functions in the pathway cell wall biogenesis; peptidoglycan biosynthesis. In terms of biological role, cell wall formation. Adds enolpyruvyl to UDP-N-acetylglucosamine. This chain is UDP-N-acetylglucosamine 1-carboxyvinyltransferase, found in Chelativorans sp. (strain BNC1).